The following is a 91-amino-acid chain: Small ribosomal subunit protein bS18 (91 aa).

The protein belongs to the bacterial ribosomal protein bS18 family. As to quaternary structure, part of the 30S ribosomal subunit. Forms a tight heterodimer with protein bS6.

Its function is as follows. Binds as a heterodimer with protein bS6 to the central domain of the 16S rRNA, where it helps stabilize the platform of the 30S subunit. This is Small ribosomal subunit protein bS18 from Gluconacetobacter diazotrophicus (strain ATCC 49037 / DSM 5601 / CCUG 37298 / CIP 103539 / LMG 7603 / PAl5).